Reading from the N-terminus, the 313-residue chain is Protein FixB (313 aa).

Residue L255–D283 participates in FAD binding.

This sequence belongs to the ETF alpha-subunit/FixB family. Heterodimer of FixA and FixB.

It participates in amine and polyamine metabolism; carnitine metabolism. Functionally, required for anaerobic carnitine reduction. May bring reductant to CaiA. This Escherichia coli O81 (strain ED1a) protein is Protein FixB.